Reading from the N-terminus, the 785-residue chain is 1-phosphatidylinositol 4,5-bisphosphate phosphodiesterase delta-3 (785 aa).

The segment at 1-43 is disordered; it reads MLCGGWKRSRRSPEESRVSAQVAAPLAFPPSPASSDSSTKRPG. The 104-residue stretch at 65–168 folds into the PH domain; sequence SRLLKIRSRT…WVRGLAKLRA (104 aa). Positions 69–97 are substrate binding; that stretch reads KIRSRTWHKERLYRLQEDGLSVWFQRRIP. At S101 the chain carries Phosphoserine. EF-hand domains are found at residues 178-213, 214-249, and 246-281; these read RLDH…VNVD, MNDM…LLKR, and LLKR…QGED. D191, D193, D195, K197, E202, D227, S229, N231, R233, and E238 together coordinate Ca(2+). Residues 333-478 form the PI-PLC X-box domain; sequence QDMGQPLAHY…LKGRILVKGK (146 aa). H348 is a catalytic residue. Ca(2+)-binding residues include N349, E378, and D380. The active site involves H393. E427 serves as a coordination point for Ca(2+). Substrate is bound by residues K476 and K478. The span at 484–493 shows a compositional bias: basic and acidic residues; the sequence is RSEDGRILSD. A disordered region spans residues 484–517; it reads RSEDGRILSDREEEEEEEEEAEEALEAAEQRSRA. Position 492 is a phosphoserine (S492). Acidic residues predominate over residues 494 to 509; the sequence is REEEEEEEEEAEEALE. A PI-PLC Y-box domain is found at 524–640; sequence LSALAVYCCA…GYVLKPAYLR (117 aa). S553 is a substrate binding site. Position 569 is a phosphoserine (S569). R580 contacts substrate. Positions 636–765 constitute a C2 domain; it reads PAYLRQLNTT…QGYRHIHLLS (130 aa). Positions 679, 681, 705, 734, 735, and 736 each coordinate Ca(2+).

The cofactor is Ca(2+). As to expression, expressed in cerebellum and cerebral cortex.

It is found in the membrane. The protein localises to the cytoplasm. Its subcellular location is the cleavage furrow. It catalyses the reaction a 1,2-diacyl-sn-glycero-3-phospho-(1D-myo-inositol-4,5-bisphosphate) + H2O = 1D-myo-inositol 1,4,5-trisphosphate + a 1,2-diacyl-sn-glycerol + H(+). Its activity is regulated as follows. Strongly activated by phosphatidic acid. Inhibited by phosphatidylethanolamine (PtdEtn), phosphatidylcholine (PtdCho), sphingomyelin and phosphatidylserine (PtdSer). Functionally, hydrolyzes the phosphatidylinositol 4,5-bisphosphate (PIP2) to generate 2 second messenger molecules diacylglycerol (DAG) and inositol 1,4,5-trisphosphate (IP3). DAG mediates the activation of protein kinase C (PKC), while IP3 releases Ca(2+) from intracellular stores. Essential for trophoblast and placental development. May participate in cytokinesis by hydrolyzing PIP2 at the cleavage furrow. Regulates neurite outgrowth through the inhibition of RhoA/Rho kinase signaling. This Mus musculus (Mouse) protein is 1-phosphatidylinositol 4,5-bisphosphate phosphodiesterase delta-3.